The following is a 162-amino-acid chain: Ribosome maturation factor RimP (162 aa).

Belongs to the RimP family.

It is found in the cytoplasm. Required for maturation of 30S ribosomal subunits. In Cupriavidus necator (strain ATCC 17699 / DSM 428 / KCTC 22496 / NCIMB 10442 / H16 / Stanier 337) (Ralstonia eutropha), this protein is Ribosome maturation factor RimP.